Here is a 156-residue protein sequence, read N- to C-terminus: Ribosomal RNA large subunit methyltransferase H (156 aa).

Residues Leu73, Gly104, and Leu123 to Leu128 each bind S-adenosyl-L-methionine.

This sequence belongs to the RNA methyltransferase RlmH family. In terms of assembly, homodimer.

It is found in the cytoplasm. It catalyses the reaction pseudouridine(1915) in 23S rRNA + S-adenosyl-L-methionine = N(3)-methylpseudouridine(1915) in 23S rRNA + S-adenosyl-L-homocysteine + H(+). In terms of biological role, specifically methylates the pseudouridine at position 1915 (m3Psi1915) in 23S rRNA. The chain is Ribosomal RNA large subunit methyltransferase H from Marinobacter nauticus (strain ATCC 700491 / DSM 11845 / VT8) (Marinobacter aquaeolei).